The primary structure comprises 270 residues: Urease accessory protein UreD (270 aa).

This sequence belongs to the UreD family. UreD, UreF and UreG form a complex that acts as a GTP-hydrolysis-dependent molecular chaperone, activating the urease apoprotein by helping to assemble the nickel containing metallocenter of UreC. The UreE protein probably delivers the nickel.

It is found in the cytoplasm. Required for maturation of urease via the functional incorporation of the urease nickel metallocenter. The chain is Urease accessory protein UreD from Klebsiella pneumoniae.